We begin with the raw amino-acid sequence, 99 residues long: Small ribosomal subunit protein uS14 (99 aa).

This sequence belongs to the universal ribosomal protein uS14 family. As to quaternary structure, part of the 30S ribosomal subunit. Contacts proteins S3 and S10.

Its function is as follows. Binds 16S rRNA, required for the assembly of 30S particles and may also be responsible for determining the conformation of the 16S rRNA at the A site. This is Small ribosomal subunit protein uS14 from Bacteroides fragilis (strain ATCC 25285 / DSM 2151 / CCUG 4856 / JCM 11019 / LMG 10263 / NCTC 9343 / Onslow / VPI 2553 / EN-2).